Reading from the N-terminus, the 80-residue chain is Large ribosomal subunit protein eL38 (80 aa).

Belongs to the eukaryotic ribosomal protein eL38 family. Component of the large ribosomal subunit (LSU). Mature N.crassa ribosomes consist of a small (40S) and a large (60S) subunit. The 40S small subunit contains 1 molecule of ribosomal RNA (18S rRNA) and at least 32 different proteins. The large 60S subunit contains 3 rRNA molecules (26S, 5.8S and 5S rRNA) and at least 42 different proteins.

The protein resides in the cytoplasm. Component of the ribosome, a large ribonucleoprotein complex responsible for the synthesis of proteins in the cell. The small ribosomal subunit (SSU) binds messenger RNAs (mRNAs) and translates the encoded message by selecting cognate aminoacyl-transfer RNA (tRNA) molecules. The large subunit (LSU) contains the ribosomal catalytic site termed the peptidyl transferase center (PTC), which catalyzes the formation of peptide bonds, thereby polymerizing the amino acids delivered by tRNAs into a polypeptide chain. The nascent polypeptides leave the ribosome through a tunnel in the LSU and interact with protein factors that function in enzymatic processing, targeting, and the membrane insertion of nascent chains at the exit of the ribosomal tunnel. The sequence is that of Large ribosomal subunit protein eL38 (rpl-38) from Neurospora crassa (strain ATCC 24698 / 74-OR23-1A / CBS 708.71 / DSM 1257 / FGSC 987).